We begin with the raw amino-acid sequence, 101 residues long: MAAKLKKGDRVVVLAGKDKGKQGEITSVMPKDNKAVVEGVNIAIRHAKQTPTSQGGRIAKAMPIDLSNLALLDANGKATRVGFRFEGEKKVRYAKTTGDVI.

Belongs to the universal ribosomal protein uL24 family. In terms of assembly, part of the 50S ribosomal subunit.

One of two assembly initiator proteins, it binds directly to the 5'-end of the 23S rRNA, where it nucleates assembly of the 50S subunit. Its function is as follows. One of the proteins that surrounds the polypeptide exit tunnel on the outside of the subunit. The protein is Large ribosomal subunit protein uL24 of Cereibacter sphaeroides (strain ATCC 17025 / ATH 2.4.3) (Rhodobacter sphaeroides).